Consider the following 400-residue polypeptide: NADH-quinone oxidoreductase subunit D (400 aa).

This sequence belongs to the complex I 49 kDa subunit family. NDH-1 is composed of 14 different subunits. Subunits NuoB, C, D, E, F, and G constitute the peripheral sector of the complex.

It localises to the cell inner membrane. It carries out the reaction a quinone + NADH + 5 H(+)(in) = a quinol + NAD(+) + 4 H(+)(out). In terms of biological role, NDH-1 shuttles electrons from NADH, via FMN and iron-sulfur (Fe-S) centers, to quinones in the respiratory chain. The immediate electron acceptor for the enzyme in this species is believed to be menaquinone. Couples the redox reaction to proton translocation (for every two electrons transferred, four hydrogen ions are translocated across the cytoplasmic membrane), and thus conserves the redox energy in a proton gradient. The sequence is that of NADH-quinone oxidoreductase subunit D from Prosthecochloris aestuarii (strain DSM 271 / SK 413).